The chain runs to 732 residues: 1,4-alpha-glucan branching enzyme GlgB (732 aa).

Asp-412 (nucleophile) is an active-site residue. The Proton donor role is filled by Glu-465.

Belongs to the glycosyl hydrolase 13 family. GlgB subfamily. As to quaternary structure, monomer.

It catalyses the reaction Transfers a segment of a (1-&gt;4)-alpha-D-glucan chain to a primary hydroxy group in a similar glucan chain.. It functions in the pathway glycan biosynthesis; glycogen biosynthesis. Functionally, catalyzes the formation of the alpha-1,6-glucosidic linkages in glycogen by scission of a 1,4-alpha-linked oligosaccharide from growing alpha-1,4-glucan chains and the subsequent attachment of the oligosaccharide to the alpha-1,6 position. The polypeptide is 1,4-alpha-glucan branching enzyme GlgB (Pseudomonas aeruginosa (strain ATCC 15692 / DSM 22644 / CIP 104116 / JCM 14847 / LMG 12228 / 1C / PRS 101 / PAO1)).